The following is a 165-amino-acid chain: Shikimate kinase (165 aa).

11–16 (GAGKTT) serves as a coordination point for ATP. A Mg(2+)-binding site is contributed by T15. Residues D33, R57, and G78 each contribute to the substrate site. R116 is an ATP binding site. R134 is a binding site for substrate.

The protein belongs to the shikimate kinase family. As to quaternary structure, monomer. Mg(2+) serves as cofactor.

It localises to the cytoplasm. The enzyme catalyses shikimate + ATP = 3-phosphoshikimate + ADP + H(+). It participates in metabolic intermediate biosynthesis; chorismate biosynthesis; chorismate from D-erythrose 4-phosphate and phosphoenolpyruvate: step 5/7. Catalyzes the specific phosphorylation of the 3-hydroxyl group of shikimic acid using ATP as a cosubstrate. The sequence is that of Shikimate kinase from Bacillus anthracis (strain A0248).